A 355-amino-acid chain; its full sequence is Glucokinase (355 aa).

An ATP-binding site is contributed by 11–16 (GDIGGT).

The protein belongs to the bacterial glucokinase family.

It is found in the cytoplasm. The enzyme catalyses D-glucose + ATP = D-glucose 6-phosphate + ADP + H(+). This chain is Glucokinase, found in Synechocystis sp. (strain ATCC 27184 / PCC 6803 / Kazusa).